The chain runs to 1958 residues: Callose synthase 7 (1958 aa).

Residues 1–29 (MASTSSGGRGEDGRPPQMQPVRSMSRKMT) are disordered. The Cytoplasmic segment spans residues 1–504 (MASTSSGGRG…LYRSFDRMWM (504 aa)). The helical transmembrane segment at 505–525 (FLVLSLQTMIIVAWHPSGSIL) threads the bilayer. Residues 526–535 (AIFTEDVFRN) lie on the Extracellular side of the membrane. A helical membrane pass occupies residues 536–556 (VLTIFITSAFLNLLQATLDLV). At 557–569 (LSFGAWKSLKFSQ) the chain is on the cytoplasmic side. Residues 570–590 (IMRYITKFLMAAMWAIMLPIT) form a helical membrane-spanning segment. The Extracellular portion of the chain corresponds to 591-620 (YSKSVQNPTGLIKFFSSWVGSWLHRSLYDY). Residues 621–641 (AIALYVLPNILAAVFFLLPPL) form a helical membrane-spanning segment. Residues 642–673 (RRIMERSNMRIVTLIMWWAQPKLYIGRGMHEE) are Cytoplasmic-facing. The chain crosses the membrane as a helical span at residues 674 to 694 (MFALFKYTFFWVMLLLSKLAF). At 695 to 730 (SYYVEILPLVNPTKLIWDMHVVNYEWHEFFPNATHN) the chain is on the extracellular side. The helical transmembrane segment at 731–751 (IGVIIAIWGPIVLVYFMDTQI) threads the bilayer. Topologically, residues 752-1496 (WYAIFSTLFG…FDFYRMLSFY (745 aa)) are cytoplasmic. Residues 1497–1517 (FTTVGFYFSSMITVLTVYVFL) form a helical membrane-spanning segment. The Extracellular segment spans residues 1518-1547 (YGRLYLVLSGLEKNILQSASVHESNALEQA). Residues 1548-1568 (LAAQSVFQLGFLMVLPMVMEI) traverse the membrane as a helical segment. Residues 1569–1576 (GLEKGFRT) lie on the Cytoplasmic side of the membrane. A helical transmembrane segment spans residues 1577–1597 (ALGDFIIMQLQLASVFFTFQL). Topologically, residues 1598-1640 (GTKAHYFGRTILHGGSKYRATGRGFVVFHAKFAENYRLYSRSH) are extracellular. The helical transmembrane segment at 1641-1661 (FVKGLELVILLVVYQVYGTSY) threads the bilayer. Residues 1662-1667 (RSSSTY) lie on the Cytoplasmic side of the membrane. A helical membrane pass occupies residues 1668-1688 (MYITFSMWFLVTSWLFAPFIF). At 1689–1742 (NPSGFEWQKTVDDWTDWKRWMGNRGGIGIVLDKSWESWWDIEQEHLKHTNLRGR) the chain is on the extracellular side. Residues 1743-1763 (VLEILLALRFLLYQYGIVYHL) traverse the membrane as a helical segment. Residues 1764 to 1771 (NIARRHTT) are Cytoplasmic-facing. Residues 1772-1792 (FLVYGLSWAILLSVLLVLKMV) traverse the membrane as a helical segment. Residues 1793 to 1812 (SMGRRKFGTDFQVMFRILKA) are Extracellular-facing. Residues 1813 to 1833 (LLFLGFLSVMTVLFVVCGLTI) form a helical membrane-spanning segment. Over 1834–1835 (SD) the chain is Cytoplasmic. The helical transmembrane segment at 1836–1856 (LFASILAFLPTGWAILLIGQA) threads the bilayer. Residues 1857 to 1878 (LRSVFKGLGFWDSVKELGRAYE) lie on the Extracellular side of the membrane. A helical transmembrane segment spans residues 1879 to 1899 (YIMGLVIFTPIAVLSWFPFVS). At 1900 to 1958 (EFQTRLLFNQAFSRGLQISMILAGKKDKETPSTKYLGHTEESFGLEHDTNTFNHYYLWT) the chain is on the cytoplasmic side.

The protein belongs to the glycosyltransferase 48 family.

Its subcellular location is the cell membrane. The catalysed reaction is [(1-&gt;3)-beta-D-glucosyl](n) + UDP-alpha-D-glucose = [(1-&gt;3)-beta-D-glucosyl](n+1) + UDP + H(+). Involved in callose synthesis at the forming cell plate during cytokinesis. During plant growth and development, callose is found as a transitory component of the cell plate in dividing cells, is a major component of pollen mother cell walls and pollen tubes, and is found as a structural component of plasmodesmatal canals. The protein is Callose synthase 7 (CALS7) of Arabidopsis thaliana (Mouse-ear cress).